The following is a 596-amino-acid chain: Protein Malvolio (596 aa).

Residues Met-1–Leu-34 are disordered. A compositionally biased stretch (gly residues) spans Gly-11 to Ser-28. Asn-41 is a glycosylation site (N-linked (GlcNAc...) asparagine). Helical transmembrane passes span Leu-77–Ile-97, Ala-105–Met-125, Trp-154–Gly-174, Val-186–Leu-206, Phe-216–Ser-236, Ala-263–Val-283, and Val-309–Met-329. The N-linked (GlcNAc...) asparagine glycan is linked to Asn-359. 5 helical membrane-spanning segments follow: residues Leu-373 to Ala-393, Val-424 to Met-444, Pro-463 to Val-483, Ile-490 to Gln-510, and Leu-520 to Ile-540. Asn-574 is a glycosylation site (N-linked (GlcNAc...) asparagine).

Belongs to the NRAMP family. Expressed in macrophages and in the nervous system.

The protein resides in the membrane. In terms of biological role, putative transporter required for normal taste behavior. May be a nitrite/nitrate transporter. The polypeptide is Protein Malvolio (Mvl) (Drosophila melanogaster (Fruit fly)).